We begin with the raw amino-acid sequence, 624 residues long: Matrilin-4 (624 aa).

The first 21 residues, 1–21 (MRGPCCWPLSLLLLFLQSWET), serve as a signal peptide directing secretion. The 180-residue stretch at 36-215 (DLVFMIDSSR…EFGLQFQGRL (180 aa)) folds into the VWFA 1 domain. An N-linked (GlcNAc...) asparagine glycan is attached at asparagine 71. EGF-like domains are found at residues 217 to 257 (GKDL…KNCL), 258 to 298 (ALDL…RSCR), 299 to 339 (AIDY…RSCR), and 340 to 380 (VRDF…KSCD). 12 disulfide bridges follow: cysteine 221-cysteine 232, cysteine 228-cysteine 241, cysteine 243-cysteine 256, cysteine 262-cysteine 273, cysteine 269-cysteine 282, cysteine 284-cysteine 297, cysteine 303-cysteine 314, cysteine 310-cysteine 323, cysteine 325-cysteine 338, cysteine 344-cysteine 355, cysteine 351-cysteine 364, and cysteine 366-cysteine 379. An N-linked (GlcNAc...) asparagine glycan is attached at asparagine 307. A VWFA 2 domain is found at 388–563 (DLVLLVDGSK…STMTHLLENL (176 aa)). Residues 590-623 (EFQGRTLGALESLTQNLARLTERLEELENQLASR) adopt a coiled-coil conformation.

In terms of assembly, interacts with COMP. In terms of tissue distribution, lung, brain, sternum, kidney and heart.

The protein resides in the secreted. In terms of biological role, major component of the extracellular matrix of cartilage. The polypeptide is Matrilin-4 (Matn4) (Mus musculus (Mouse)).